A 306-amino-acid chain; its full sequence is Malate dehydrogenase (306 aa).

Residues 8–13 and D33 each bind NAD(+); that span reads GVGRVG. Substrate-binding residues include R82 and R88. NAD(+) contacts are provided by residues N95 and 118–120; that span reads VAN. Residues N120 and R148 each contribute to the substrate site. H172 serves as the catalytic Proton acceptor.

The protein belongs to the LDH/MDH superfamily.

It catalyses the reaction (S)-malate + NAD(+) = oxaloacetate + NADH + H(+). Its function is as follows. Catalyzes the reversible oxidation of malate to oxaloacetate. The polypeptide is Malate dehydrogenase (mdh) (Sulfolobus acidocaldarius (strain ATCC 33909 / DSM 639 / JCM 8929 / NBRC 15157 / NCIMB 11770)).